Consider the following 216-residue polypeptide: Elongation factor 1-beta (216 aa).

This sequence belongs to the EF-1-beta/EF-1-delta family. In terms of assembly, EF-1 is composed of 4 subunits: alpha, beta, delta, and gamma. Interacts with actin.

It localises to the cytoplasm. Functionally, EF-1-beta and EF-1-delta stimulate the exchange of GDP bound to EF-1-alpha to GTP. This is Elongation factor 1-beta (efa1B) from Dictyostelium discoideum (Social amoeba).